The primary structure comprises 332 residues: Adenosine receptor A2b (332 aa).

The Extracellular segment spans residues 1-8; it reads MPLEAQDA. Residues 9–33 traverse the membrane as a helical segment; sequence VYVALELALAALSVTGNVLVCAAVG. Over 34-43 the chain is Cytoplasmic; the sequence is TSSALQTPTN. Residues 44 to 67 form a helical membrane-spanning segment; sequence YFLVSLAAADVAVGLFAIPFAVTI. Over 68-78 the chain is Extracellular; sequence SLGFCTDFHSC. An intrachain disulfide couples cysteine 78 to cysteine 170. The helical transmembrane segment at 79 to 101 threads the bilayer; sequence LFLACFVLVLTQSSIFSLLAVAV. The Cytoplasmic portion of the chain corresponds to 102-121; the sequence is DRYLAVRVPLRYKSLVTGAR. Residues 122 to 144 traverse the membrane as a helical segment; that stretch reads ARGVIAALWVLAFGIGLTPFLGW. At 145–177 the chain is on the extracellular side; that stretch reads NDRKIATNCTEPGDAATNVSCCLIRCLFENVVP. N-linked (GlcNAc...) asparagine glycans are attached at residues asparagine 152 and asparagine 162. Adenosine is bound at residue glutamate 173. Residues 178–202 form a helical membrane-spanning segment; that stretch reads MSYMVYFNFFGCVLPPLLIMLVIYV. Residues 203–234 lie on the Cytoplasmic side of the membrane; the sequence is KIFLVACRQLQRTELMDHSRTVLQREIHAAKS. Residues 235–258 traverse the membrane as a helical segment; it reads LALIVGIFALCWLPVHTINCASLF. Position 253 (asparagine 253) interacts with adenosine. Over 259 to 266 the chain is Extracellular; it reads QPTWAKVK. Residues 267 to 290 traverse the membrane as a helical segment; it reads PKWAINTAILLSHANSAVNPIVYA. Serine 278 and histidine 279 together coordinate adenosine. Residues 291–332 are Cytoplasmic-facing; it reads YRNRDFRYTFHKIISRYILCRTHILKSGEGQVGSQPTLQLGL. Residue cysteine 310 is the site of S-palmitoyl cysteine attachment.

Belongs to the G-protein coupled receptor 1 family.

The protein localises to the cell membrane. Receptor for adenosine. The activity of this receptor is mediated by G proteins which activate adenylyl cyclase. The polypeptide is Adenosine receptor A2b (ADORA2B) (Bos taurus (Bovine)).